Reading from the N-terminus, the 303-residue chain is MNPQELKSILSSGLLSFPVTDFNAQGDFHRAGYIKRLEWLAPYGASALFAAGGTGEFFSLAASEYSEIIKTAVDTCATSVPILAGVGGATRQAIEYAQEAERLGAKGLLLLPHYLTEASQDGVAAHVEAVCKSVKIGVVVYNRNVCRLTPTLLEQLAERCPNLIGYKDGLGDIELMVSIRRRLGDRFSYLGGLPTAEVYAAAYKALGVPVYSSAVFNFVPKLAMDFYHAIARDDHEAVGKYIDDFFLPYLEIRNRKAGYAVSIVKAGAKIAGYDAGPVRAPLTDLTPDECDMLAALMDKQGKQ.

This sequence belongs to the DapA family.

The enzyme catalyses 5-dehydro-4-deoxy-D-glucarate + H(+) = 2,5-dioxopentanoate + CO2 + H2O. It participates in carbohydrate acid metabolism; D-glucarate degradation; 2,5-dioxopentanoate from D-glucarate: step 2/2. The protein is Probable 5-dehydro-4-deoxyglucarate dehydratase of Pseudomonas syringae pv. tomato (strain ATCC BAA-871 / DC3000).